The following is a 79-amino-acid chain: Small ribosomal subunit protein uS17 (79 aa).

Belongs to the universal ribosomal protein uS17 family. In terms of assembly, part of the 30S ribosomal subunit.

Functionally, one of the primary rRNA binding proteins, it binds specifically to the 5'-end of 16S ribosomal RNA. This is Small ribosomal subunit protein uS17 from Rhizobium leguminosarum bv. trifolii (strain WSM2304).